Reading from the N-terminus, the 213-residue chain is Protein FAM177A1 (213 aa).

M1 is modified (N-acetylmethionine). Position 70 is a phosphoserine (S70). T71 is subject to Phosphothreonine. Residues 136-173 (IDEYYRMKKEEEEEEEENRMSEEAEKQYQQNKLQTDSI) adopt a coiled-coil conformation. Positions 147–175 (EEEEEENRMSEEAEKQYQQNKLQTDSIVQ) are disordered. The segment covering 162–175 (QYQQNKLQTDSIVQ) has biased composition (polar residues).

It belongs to the FAM177 family.

The protein is Protein FAM177A1 (FAM177A1) of Homo sapiens (Human).